Consider the following 152-residue polypeptide: Aspartate carbamoyltransferase regulatory chain (152 aa).

Zn(2+) is bound by residues C108, C113, C137, and C140.

It belongs to the PyrI family. In terms of assembly, contains catalytic and regulatory chains. Zn(2+) is required as a cofactor.

Functionally, involved in allosteric regulation of aspartate carbamoyltransferase. In Neisseria gonorrhoeae (strain ATCC 700825 / FA 1090), this protein is Aspartate carbamoyltransferase regulatory chain.